Consider the following 421-residue polypeptide: Zinc metalloproteinase-disintegrin-like lachestatin-2 (421 aa).

Residues 10–206 (KYVKLVLVAD…DMPQCILEKP (197 aa)) enclose the Peptidase M12B domain. Disulfide bonds link cysteine 121–cysteine 201, cysteine 161–cysteine 185, and cysteine 163–cysteine 168. Residue histidine 146 participates in Zn(2+) binding. Glutamate 147 is a catalytic residue. The Zn(2+) site is built by histidine 150 and histidine 156. Residues 214–299 (PPVCGNYFVE…AECTDRFQRN (86 aa)) enclose the Disintegrin domain. 6 residues coordinate Ca(2+): valine 216, asparagine 219, phenylalanine 221, glutamate 223, glutamate 226, and aspartate 229. Cystine bridges form between cysteine 217–cysteine 246, cysteine 228–cysteine 241, cysteine 230–cysteine 236, cysteine 240–cysteine 263, cysteine 254–cysteine 260, cysteine 259–cysteine 285, cysteine 272–cysteine 292, cysteine 279–cysteine 310, cysteine 303–cysteine 315, cysteine 322–cysteine 372, cysteine 337–cysteine 383, cysteine 350–cysteine 360, cysteine 367–cysteine 409, and cysteine 403–cysteine 414. A D/ECD-tripeptide motif is present at residues 278-280 (ECD). Ca(2+) contacts are provided by aspartate 280, methionine 281, aspartate 283, aspartate 294, and arginine 295. Residue asparagine 312 is glycosylated (N-linked (GlcNAc...) asparagine).

It belongs to the venom metalloproteinase (M12B) family. P-III subfamily. P-IIIc sub-subfamily. As to quaternary structure, homodimer; disulfide-linked. The cofactor is Zn(2+). Expressed by the venom gland.

It is found in the secreted. Its function is as follows. Snake venom zinc metalloprotease that induces apoptosis in vascular endothelial cells (VEC), without degrading the extracellular matrix (it cannot cleave collagen) or inhibiting adhesion of VEC. Has also fibrinogenolytic and hemorrhagic activities. In Lachesis muta rhombeata (Bushmaster), this protein is Zinc metalloproteinase-disintegrin-like lachestatin-2.